We begin with the raw amino-acid sequence, 444 residues long: Phosphoglucosamine mutase (444 aa).

The Phosphoserine intermediate role is filled by S102. Positions 102, 241, 243, and 245 each coordinate Mg(2+). Position 102 is a phosphoserine (S102).

This sequence belongs to the phosphohexose mutase family. Mg(2+) serves as cofactor. In terms of processing, activated by phosphorylation.

The catalysed reaction is alpha-D-glucosamine 1-phosphate = D-glucosamine 6-phosphate. Its function is as follows. Catalyzes the conversion of glucosamine-6-phosphate to glucosamine-1-phosphate. In Acidovorax ebreus (strain TPSY) (Diaphorobacter sp. (strain TPSY)), this protein is Phosphoglucosamine mutase.